We begin with the raw amino-acid sequence, 113 residues long: UPF0339 protein MS1092 (113 aa).

A run of 2 repeats spans residues 11 to 59 and 62 to 110.

This sequence belongs to the UPF0339 family. Duplicated subfamily.

The chain is UPF0339 protein MS1092 from Mannheimia succiniciproducens (strain KCTC 0769BP / MBEL55E).